The following is a 124-amino-acid chain: Small ribosomal subunit protein uS13 (124 aa).

Residues 95-124 (GLPVRGQRTKTNARTRKGPKRTIAGKKKAR) form a disordered region.

Belongs to the universal ribosomal protein uS13 family. As to quaternary structure, part of the 30S ribosomal subunit. Forms a loose heterodimer with protein S19. Forms two bridges to the 50S subunit in the 70S ribosome.

In terms of biological role, located at the top of the head of the 30S subunit, it contacts several helices of the 16S rRNA. In the 70S ribosome it contacts the 23S rRNA (bridge B1a) and protein L5 of the 50S subunit (bridge B1b), connecting the 2 subunits; these bridges are implicated in subunit movement. Contacts the tRNAs in the A and P-sites. In Mycobacteroides abscessus (strain ATCC 19977 / DSM 44196 / CCUG 20993 / CIP 104536 / JCM 13569 / NCTC 13031 / TMC 1543 / L948) (Mycobacterium abscessus), this protein is Small ribosomal subunit protein uS13.